The chain runs to 173 residues: NADH-ubiquinone oxidoreductase chain 6 (173 aa).

The next 5 helical transmembrane spans lie at 1–21 (MTYLVLLLGLCFVLGGLAVAS), 27–47 (YGVVGLVLASVAGCGWLLSLG), 48–68 (VSFVSLVLFMVYLGGMLVVFV), 88–108 (VGYGASFILVVIAGMIVGGLI), and 139–159 (YGVGMFLVAGWGLLLTLFVVL).

The protein belongs to the complex I subunit 6 family.

Its subcellular location is the mitochondrion membrane. The catalysed reaction is a ubiquinone + NADH + 5 H(+)(in) = a ubiquinol + NAD(+) + 4 H(+)(out). In terms of biological role, core subunit of the mitochondrial membrane respiratory chain NADH dehydrogenase (Complex I) that is believed to belong to the minimal assembly required for catalysis. Complex I functions in the transfer of electrons from NADH to the respiratory chain. The immediate electron acceptor for the enzyme is believed to be ubiquinone. The chain is NADH-ubiquinone oxidoreductase chain 6 (MT-ND6) from Calidris maritima (Purple sandpiper).